The primary structure comprises 438 residues: MGLSMDRSPYSRTGDRDRGCWYYLRYFFLFVSLIQFLIILGLVLFMIYGNVHATTESSLRATEIRADNLYSQVVGLSAAQANLSKQLNISTLVKDTVMQQLLTTRREVERINASFRQCQGDLITYINYNRFIAAIILSEKQCQEQLKEGNKTCEALLFKLGEKVKTLEMEVVKEKAVCSKDKDSLLAGKRQAEMQQEACGKAREQQKQDQQVTEEQLRKVQSLCLPLDQEKFQADVLNVWRDSLVYRSLDNIGYHYSLMPEFSSLRRTCESLPGIMTTKVEELARGLRAGIERVTRENGELRRQKLELERAIQGEREARTRAGTEAQARETQLRTECARQTQLALEEKAALRTQRDDLERQLEARKRELEQLRTEVDVRISALDTCVKAKSLPAIQPRLPGPPPNPPPIDPASLEEFKKRILESQRPPLVNPAVPPSG.

Over 1-26 (MGLSMDRSPYSRTGDRDRGCWYYLRY) the chain is Cytoplasmic. Residues 27-47 (FFLFVSLIQFLIILGLVLFMI) traverse the membrane as a helical; Signal-anchor for type II membrane protein segment. The Extracellular portion of the chain corresponds to 48–438 (YGNVHATTES…LVNPAVPPSG (391 aa)). N82, N88, N112, and N150 each carry an N-linked (GlcNAc...) asparagine glycan. Residues 289 to 383 (AGIERVTREN…TEVDVRISAL (95 aa)) adopt a coiled-coil conformation. A disordered region spans residues 393–438 (PAIQPRLPGPPPNPPPIDPASLEEFKKRILESQRPPLVNPAVPPSG). 2 stretches are compositionally biased toward pro residues: residues 399 to 410 (LPGPPPNPPPID) and 429 to 438 (LVNPAVPPSG).

In terms of assembly, homodimer. As to expression, expressed in lung (alveolar endothelial and bronchial epithelial cells), kidney (endothelium of peritubular capillaries), spleen, liver, adrenal (endothelial cells of the zona reticularis of the cortex and chromaffin cells in the medulla), pancreas (islets of Langerhans), testis (germ cells, interstitial cells in neonatal testis and spermatids), ovary (stromal endothelial, thecal layer of developing follicles, luteal cells within the corpus luteum), intestine (endothelium of capillaries of the intestinal villi) and pituitary (pituicyte cells in the neural lobe) (at protein level). Expressed in lung, kidney, spleen, liver, adrenal, testis, heart, muscle, pituitary, thyroid and ovary.

It localises to the cell membrane. The protein resides in the membrane. It is found in the caveola. Its subcellular location is the cytoplasm. The protein localises to the perinuclear region. Functionally, endothelial cell-specific membrane protein involved in the formation of the diaphragms that bridge endothelial fenestrae. It is also required for the formation of stomata of caveolae and transendothelial channels. Functions in microvascular permeability, endothelial fenestrae contributing to the passage of water and solutes and regulating transcellular versus paracellular flow in different organs. Plays a specific role in embryonic development. The polypeptide is Plasmalemma vesicle-associated protein (Plvap) (Rattus norvegicus (Rat)).